A 381-amino-acid chain; its full sequence is Cytochrome b (381 aa).

4 helical membrane-spanning segments follow: residues 38–58 (FGSLLGLCLLIQIVIGLFLAM), 82–103 (WLLRTVHANGASFFFICIYFHI), 118–138 (WMTGIALLFLVMAAAFLGYVL), and 183–203 (FFTFHFLIPFLVAGLTMIHLL). 2 residues coordinate heme b: H88 and H102. Positions 187 and 201 each coordinate heme b. H206 contacts a ubiquinone. Transmembrane regions (helical) follow at residues 231–251 (IKDTVGFMVLIFFLVTLSLTS), 293–313 (LGGVIALVSSILILVSLPFTF), 325–345 (VAQPLFWSWVSVFLLLTWIGA), and 352–372 (YNFLGQILTCAYFSYFVFTPI).

Belongs to the cytochrome b family. As to quaternary structure, the main subunits of complex b-c1 are: cytochrome b, cytochrome c1 and the Rieske protein. Requires heme b as cofactor.

The protein localises to the mitochondrion inner membrane. Component of the ubiquinol-cytochrome c reductase complex (complex III or cytochrome b-c1 complex) that is part of the mitochondrial respiratory chain. The b-c1 complex mediates electron transfer from ubiquinol to cytochrome c. Contributes to the generation of a proton gradient across the mitochondrial membrane that is then used for ATP synthesis. The chain is Cytochrome b (MT-CYB) from Artemia franciscana (Brine shrimp).